A 758-amino-acid polypeptide reads, in one-letter code: 5-methyltetrahydropteroyltriglutamate--homocysteine methyltransferase (758 aa).

5-methyltetrahydropteroyltri-L-glutamate is bound by residues 16 to 19 and Lys-117; that span reads RELK. Residues 436 to 438 and Glu-489 contribute to the L-homocysteine site; that span reads IGS. Residues 436–438 and Glu-489 contribute to the L-methionine site; that span reads IGS. 5-methyltetrahydropteroyltri-L-glutamate is bound by residues 520-521 and Trp-566; that span reads RC. Asp-604 contacts L-homocysteine. Asp-604 provides a ligand contact to L-methionine. Residue Glu-610 participates in 5-methyltetrahydropteroyltri-L-glutamate binding. 3 residues coordinate Zn(2+): His-646, Cys-648, and Glu-670. His-699 functions as the Proton donor in the catalytic mechanism. Residue Cys-731 participates in Zn(2+) binding.

Belongs to the vitamin-B12 independent methionine synthase family. Requires Zn(2+) as cofactor.

The catalysed reaction is 5-methyltetrahydropteroyltri-L-glutamate + L-homocysteine = tetrahydropteroyltri-L-glutamate + L-methionine. It participates in amino-acid biosynthesis; L-methionine biosynthesis via de novo pathway; L-methionine from L-homocysteine (MetE route): step 1/1. Functionally, catalyzes the transfer of a methyl group from 5-methyltetrahydrofolate to homocysteine resulting in methionine formation. The sequence is that of 5-methyltetrahydropteroyltriglutamate--homocysteine methyltransferase from Ruthia magnifica subsp. Calyptogena magnifica.